A 120-amino-acid chain; its full sequence is Immunoglobulin kappa variable 2-29 (120 aa).

The first 20 residues, 1 to 20 (MRLPAQLLGLLMLWIPGSSA), serve as a signal peptide directing secretion. The segment at 21 to 43 (DIVMTQTPLSLSVTPGQPASISC) is framework-1. Residues 21-120 (DIVMTQTPLS…YYCMQGIHLP (100 aa)) enclose the Ig-like domain. A disulfide bridge links Cys-43 with Cys-113. A complementarity-determining-1 region spans residues 44 to 59 (KSSQSLLHSDGKTYLY). The segment at 60-74 (WYLQKPGQSPQLLIY) is framework-2. The interval 75-81 (EVSSRFS) is complementarity-determining-2. A framework-3 region spans residues 82 to 113 (GVPDRFSGSGSGTDFTLKISRVEAEDVGVYYC). Residues 114–120 (MQGIHLP) are complementarity-determining-3.

In terms of assembly, immunoglobulins are composed of two identical heavy chains and two identical light chains; disulfide-linked.

The protein localises to the secreted. The protein resides in the cell membrane. In terms of biological role, v region of the variable domain of immunoglobulin light chains that participates in the antigen recognition. Immunoglobulins, also known as antibodies, are membrane-bound or secreted glycoproteins produced by B lymphocytes. In the recognition phase of humoral immunity, the membrane-bound immunoglobulins serve as receptors which, upon binding of a specific antigen, trigger the clonal expansion and differentiation of B lymphocytes into immunoglobulins-secreting plasma cells. Secreted immunoglobulins mediate the effector phase of humoral immunity, which results in the elimination of bound antigens. The antigen binding site is formed by the variable domain of one heavy chain, together with that of its associated light chain. Thus, each immunoglobulin has two antigen binding sites with remarkable affinity for a particular antigen. The variable domains are assembled by a process called V-(D)-J rearrangement and can then be subjected to somatic hypermutations which, after exposure to antigen and selection, allow affinity maturation for a particular antigen. This Homo sapiens (Human) protein is Immunoglobulin kappa variable 2-29.